We begin with the raw amino-acid sequence, 538 residues long: Guanine nucleotide-binding protein-like 3 (538 aa).

Residues 1 to 45 (MKRPKLKKASKRMTCHKRYKIQKKVREHHRKLRKEAKKRGHKKPR) are compositionally biased toward basic residues. 2 disordered regions span residues 1–57 (MKRP…APFK) and 69–126 (QQLE…NPKK). Positions 2 to 46 (KRPKLKKASKRMTCHKRYKIQKKVREHHRKLRKEAKKRGHKKPRK) are basic. A coiled-coil region spans residues 54–95 (APFKEALLREAELRKQQLEELKQQQKLDRQKEQERKRKLEVS). Basic and acidic residues predominate over residues 69-93 (QQLEELKQQQKLDRQKEQERKRKLE). An N6-acetyllysine modification is found at K79. A Glycyl lysine isopeptide (Lys-Gly) (interchain with G-Cter in SUMO2) cross-link involves residue K91. Phosphoserine occurs at positions 95 and 101. Over residues 114–126 (RKKAKAGKQNPKK) the composition is skewed to basic residues. The region spanning 129–307 (CQELKKVIEA…IIDSPCLIIS (179 aa)) is the CP-type G domain. 176 to 179 (NKSD) is a binding site for GTP. Glycyl lysine isopeptide (Lys-Gly) (interchain with G-Cter in SUMO2) cross-links involve residues K177, K248, K262, and K270. A GTP-binding site is contributed by 256-263 (GFPNVGKS). Positions 277-451 (VGISMGLTRS…HLTNRILFRS (175 aa)) are intermediate. A GTP-binding site is contributed by 300–303 (DSPC). Residues 460–475 (DEKDIVEESPRQTEDK) are compositionally biased toward basic and acidic residues. The acidic stretch occupies residues 460-532 (DEKDIVEESP…RASQEDETYD (73 aa)). Positions 460–538 (DEKDIVEESP…ETYDFTTDYI (79 aa)) are disordered. Phosphoserine is present on residues S493, S505, and S518. Positions 506 to 518 (PEQSTAGKPSDGS) are enriched in polar residues.

Belongs to the TRAFAC class YlqF/YawG GTPase family. In terms of assembly, interacts with MDM2; this interaction stabilizes MDM2. Interaction with MDM2 occurs in the nucleoplasm and is triggered by a nucleolar release mechanism, such as mitosis-induced nucleolar disassembly. Indirectly interacts with TP53, via MDM2-binding. Interacts with TSC22D1 isoform 2. As to expression, expressed in the adult bone marrow population that is enriched in hematopoietic stem cells.

It is found in the nucleus. The protein localises to the nucleolus. Its function is as follows. May be required to maintain the proliferative capacity of stem cells. Stabilizes MDM2 by preventing its ubiquitination, and hence proteasomal degradation. The chain is Guanine nucleotide-binding protein-like 3 (Gnl3) from Mus musculus (Mouse).